The sequence spans 334 residues: Holliday junction branch migration complex subunit RuvB (334 aa).

A large ATPase domain (RuvB-L) region spans residues 4 to 184 (ADRLIQPQIQ…FGIPLRLEFY (181 aa)). ATP contacts are provided by residues Arg-24, Gly-65, Lys-68, Thr-69, Thr-70, 131 to 133 (EDY), Arg-174, Tyr-184, and Arg-221. Residue Thr-69 coordinates Mg(2+). The interval 185–255 (NIKDLSTIVT…VAEHALDLLD (71 aa)) is small ATPAse domain (RuvB-S). Positions 258-334 (SEGFDYMDRK…YQHFELIKPE (77 aa)) are head domain (RuvB-H). Residues Arg-294, Arg-313, and Arg-318 each coordinate DNA.

Belongs to the RuvB family. Homohexamer. Forms an RuvA(8)-RuvB(12)-Holliday junction (HJ) complex. HJ DNA is sandwiched between 2 RuvA tetramers; dsDNA enters through RuvA and exits via RuvB. An RuvB hexamer assembles on each DNA strand where it exits the tetramer. Each RuvB hexamer is contacted by two RuvA subunits (via domain III) on 2 adjacent RuvB subunits; this complex drives branch migration. In the full resolvosome a probable DNA-RuvA(4)-RuvB(12)-RuvC(2) complex forms which resolves the HJ.

Its subcellular location is the cytoplasm. The catalysed reaction is ATP + H2O = ADP + phosphate + H(+). Functionally, the RuvA-RuvB-RuvC complex processes Holliday junction (HJ) DNA during genetic recombination and DNA repair, while the RuvA-RuvB complex plays an important role in the rescue of blocked DNA replication forks via replication fork reversal (RFR). RuvA specifically binds to HJ cruciform DNA, conferring on it an open structure. The RuvB hexamer acts as an ATP-dependent pump, pulling dsDNA into and through the RuvAB complex. RuvB forms 2 homohexamers on either side of HJ DNA bound by 1 or 2 RuvA tetramers; 4 subunits per hexamer contact DNA at a time. Coordinated motions by a converter formed by DNA-disengaged RuvB subunits stimulates ATP hydrolysis and nucleotide exchange. Immobilization of the converter enables RuvB to convert the ATP-contained energy into a lever motion, pulling 2 nucleotides of DNA out of the RuvA tetramer per ATP hydrolyzed, thus driving DNA branch migration. The RuvB motors rotate together with the DNA substrate, which together with the progressing nucleotide cycle form the mechanistic basis for DNA recombination by continuous HJ branch migration. Branch migration allows RuvC to scan DNA until it finds its consensus sequence, where it cleaves and resolves cruciform DNA. The protein is Holliday junction branch migration complex subunit RuvB of Shewanella baltica (strain OS195).